We begin with the raw amino-acid sequence, 1883 residues long: MPVGRIECPSSPSFPRDISHECRVCGVTEVGLSAYAKHISGQLHKDNVDAQEREDDGKGEEEEEDYFDKELIQLIKQRKEQSRQDEPSNSNQEINSDDRRPQWRREDRIPYQDRESYSQPAWHHRGPPQRDWKWEKDGFNNTRKNSFPHSLRNGGGPRGRSGWHKGVAGGSSTWFHNHSNSGGGWLSNSGAVDWNHNGTGRNSSWLSEGTGGFSSWHMNNSNGNWKSSVRSTNNWNYSGPGDKFQPGRNRNSNCQMEDMTMLWNKKSNKSNKYSHDRYNWQRQENDKLGTVATYRGPSEGFTSDKFPSEGLLDFNFEQLESQTTKQADTATSKVSGKNGSAAREKPRRWTPYPSQKTLDLQSGLKDITGNKSEMIEKPLFDFSLITTGIQEPQTDETRNSPTQKTQKEIHTGSLNHKASSDSAASFEVVRQCPTAEKPEQEHTPNKMPSLKSPLLPCPATKSLSQKQDPKNISKNTKTNFFSPGEHSNPSNKPTVEDNHGPYISKLRSSCPHVLKGNKSTFGSQKQSGDNLNDTLRKAKEVLQCHESLQNPLLSTSKSTRNYAKASRNVEESEKGSLKIEFQVHALEDESDGETSDTEKHGTKIGTLGSATTELLSGSTRTADEKEEDDRILKTSRELSTSPCNPIVRQKESELQMTSAASPHPGLLLDLKTSLEDAQVDDSIKSHVSYETEGFESASLDAELQKSDISQPSGPLLPELSKLGFPASLQRDLTRHISLKSKTGVHLPEPNLNSARRIRNISGHRKSETEKESGLKPTLRQILNASRRNVNWEQVIQQVTKKKQELGKGLPRFGIEMVPLVQNEQEALDLDGEPDLSSLEGFQWEGVSISSSPGLARKRSLSESSVIMDRAPSVYSFFSEEGTGKENEPQQMVSPSNSLRAGQSQKATMHLKQEVTPRAASLRTGERAENVATQRRHSAQLSSDHIIPLMHLAKDLNSQERSIPPSENQNSQESNGEGNCLSSSASSALAISSLADAATDSSCTSGAEQNDGQSIRKKRRATGDGSSPELPSLERKNKRRKIKGKKERSQVDQLLNISLREEELSKSLQCMDNNLLQARAALQTAYVEVQRLLMLKQQITMEMSALRTHRIQILQGLQETYEPSEHPDQVPCSLTRERRNSRSQTSIDAALLPTPFFPLFLEPPSSHVSPSPTGASLQITTSPTFQTHGSVPAPDSSVQIKQEPMSPEQDENVNAVPPSSACNVSKELLEANREISDSCPVYPVITARLSLPESTESFHEPSQELKFSVEQRNTRNRENSPSSQSAGLSSINKEGEEPTKGNSGSEACTSSFLRLSFASETPLEKEPHSPADQPEQQAESTLTSAETRGSKKKKKLRKKKSLRAAHVPENSDTEQDVLTVKPVRKVKAGKLIKGGKVTTSTWEDSRTGREQESVRDEPDSDSSLEVLEIPNPQLEVVAIDSSESGEEKPDSPSKKDIWNSTEQNPLETSRSGCDEVSSTSEIGTRYKDGIPVSVAETQTVISSIKGSKNSSEISSEPGDDDEPTEGSFEGHQAAVNAIQIFGNLLYTCSADKTVRVYNLVSRKCIGVFEGHTSKVNCLLVTQTSGKNAALYTGSSDHTIRCYNVKSRECVEQLQLEDRVLCLHSRWRILYAGLANGTVVTFNIKNNKRLEIFECHGPRAVSCLATAQEGARKLLVVGSYDCTISVRDARNGLLLRTLEGHSKTILCMKVVNDLVFSGSSDQSVHAHNIHTGELVRIYKGHNHAVTVVNILGKVMVTACLDKFVRVYELQSHDRLQVYGGHKDMIMCMTIHKSMIYTGCYDGSIQAVRLNLMQNYRCWWHGCSLIFGVVDHLKQHLLTDHTNPNFQTLKCRWKNCDAFFTARKGSKQDAAGHIERHAEDDSKIDS.

Glycyl lysine isopeptide (Lys-Gly) (interchain with G-Cter in SUMO2) cross-links involve residues Ile6 and Lys37. The segment at 20–44 adopts a C2H2-type 1; atypical zinc-finger fold; it reads HECRVCGVTEVGLSAYAKHISGQLH. The interval 39 to 162 is disordered; the sequence is ISGQLHKDNV…NGGGPRGRSG (124 aa). Residues 52-67 show a composition bias toward acidic residues; it reads EREDDGKGEEEEEDYF. Residues Lys69 and Lys76 each participate in a glycyl lysine isopeptide (Lys-Gly) (interchain with G-Cter in SUMO2) cross-link. 3 stretches are compositionally biased toward basic and acidic residues: residues 77–86, 96–116, and 128–138; these read QRKEQSRQDE, SDDR…DRES, and PQRDWKWEKDG. Lys133 is covalently cross-linked (Glycyl lysine isopeptide (Lys-Gly) (interchain with G-Cter in SUMO2)). Polar residues predominate over residues 139 to 148; the sequence is FNNTRKNSFP. Residues Lys243, Lys287, and Lys305 each participate in a glycyl lysine isopeptide (Lys-Gly) (interchain with G-Cter in SUMO2) cross-link. Polar residues predominate over residues 322–338; the sequence is QTTKQADTATSKVSGKN. The tract at residues 322-356 is disordered; sequence QTTKQADTATSKVSGKNGSAAREKPRRWTPYPSQK. Glycyl lysine isopeptide (Lys-Gly) (interchain with G-Cter in SUMO2) cross-links involve residues Lys356, Lys365, Lys371, and Lys417. Residues 389 to 423 are disordered; the sequence is IQEPQTDETRNSPTQKTQKEIHTGSLNHKASSDSA. Residues 412–423 are compositionally biased toward polar residues; sequence GSLNHKASSDSA. Position 422 is a phosphoserine (Ser422). Residues Lys451, Lys461, Lys477, Lys492, Lys505, Lys515, Lys525, Lys539, and Lys557 each participate in a glycyl lysine isopeptide (Lys-Gly) (interchain with G-Cter in SUMO2) cross-link. A disordered region spans residues 457–501; that stretch reads CPATKSLSQKQDPKNISKNTKTNFFSPGEHSNPSNKPTVEDNHGP. Positions 461-493 are enriched in polar residues; it reads KSLSQKQDPKNISKNTKTNFFSPGEHSNPSNKP. Positions 586–637 are disordered; the sequence is LEDESDGETSDTEKHGTKIGTLGSATTELLSGSTRTADEKEEDDRILKTSRE. Phosphoserine is present on Ser590. Residue Lys603 forms a Glycyl lysine isopeptide (Lys-Gly) (interchain with G-Cter in SUMO2) linkage. A compositionally biased stretch (polar residues) spans 608–620; it reads GSATTELLSGSTR. Phosphoserine is present on residues Ser641 and Ser661. Glycyl lysine isopeptide (Lys-Gly) (interchain with G-Cter in SUMO2) cross-links involve residues Lys671, Lys684, Lys705, Lys721, Lys741, Lys775, and Lys807. A phosphoserine mark is found at Ser859, Ser861, Ser864, and Ser893. The tract at residues 879-945 is disordered; that stretch reads EEGTGKENEP…HSAQLSSDHI (67 aa). Residues 888 to 906 show a composition bias toward polar residues; it reads PQQMVSPSNSLRAGQSQKA. Glycyl lysine isopeptide (Lys-Gly) (interchain with G-Cter in SUMO2) cross-links involve residues Lys905 and Lys911. Position 937 is a phosphoserine (Ser937). Residue Lys953 forms a Glycyl lysine isopeptide (Lys-Gly) (interchain with G-Cter in SUMO2) linkage. A compositionally biased stretch (polar residues) spans 958–976; the sequence is QERSIPPSENQNSQESNGE. Disordered stretches follow at residues 958–982, 997–1048, 1121–1140, and 1182–1218; these read QERS…CLSS, ATDS…KERS, EPSE…RRNS, and PTFQ…VPPS. Thr1021 carries the post-translational modification Phosphothreonine. Phosphoserine occurs at positions 1025, 1026, and 1031. Positions 1035–1045 are enriched in basic residues; the sequence is KNKRRKIKGKK. Ser1249 carries the post-translational modification Phosphoserine. The tract at residues 1252-1483 is disordered; it reads ESTESFHEPS…EVSSTSEIGT (232 aa). Over residues 1255-1277 the composition is skewed to basic and acidic residues; the sequence is ESFHEPSQELKFSVEQRNTRNRE. Lys1265 is covalently cross-linked (Glycyl lysine isopeptide (Lys-Gly) (interchain with G-Cter in SUMO2)). Polar residues-rich tracts occupy residues 1278-1291 and 1299-1312; these read NSPS…SSIN and KGNS…SSFL. Phosphoserine is present on residues Ser1279, Ser1281, and Ser1284. Lys1299 participates in a covalent cross-link: Glycyl lysine isopeptide (Lys-Gly) (interchain with G-Cter in SUMO2). Phosphoserine is present on Ser1302. Lys1324 is covalently cross-linked (Glycyl lysine isopeptide (Lys-Gly) (interchain with G-Cter in SUMO2)). Position 1328 is a phosphoserine (Ser1328). The segment covering 1333 to 1346 has biased composition (polar residues); that stretch reads PEQQAESTLTSAET. Residues 1349–1362 are compositionally biased toward basic residues; the sequence is SKKKKKLRKKKSLR. The residue at position 1370 (Ser1370) is a Phosphoserine. Thr1372 is modified (phosphothreonine). Glycyl lysine isopeptide (Lys-Gly) (interchain with G-Cter in SUMO2) cross-links involve residues Lys1380, Lys1392, and Lys1395. Basic and acidic residues-rich tracts occupy residues 1402-1416 and 1444-1456; these read EDSR…VRDE and GEEK…KKDI. Lys1454 participates in a covalent cross-link: Glycyl lysine isopeptide (Lys-Gly) (interchain with G-Cter in SUMO2). Residues 1457 to 1481 are compositionally biased toward polar residues; it reads WNSTEQNPLETSRSGCDEVSSTSEI. Ser1468 carries the post-translational modification Phosphoserine. Glycyl lysine isopeptide (Lys-Gly) (interchain with G-Cter in SUMO2) cross-links involve residues Lys1486 and Lys1504. Residues 1502-1513 show a composition bias toward polar residues; that stretch reads SIKGSKNSSEIS. Positions 1502–1527 are disordered; that stretch reads SIKGSKNSSEISSEPGDDDEPTEGSF. WD repeat units lie at residues 1529–1568, 1570–1611, 1654–1695, 1698–1737, 1738–1775, and 1778–1815; these read GHQA…GVFE, HTSK…CVEQ, HGPR…LLRT, GHSK…RIYK, GHNH…RLQV, and GHKD…NYRC. A Glycyl lysine isopeptide (Lys-Gly) (interchain with G-Cter in SUMO2) cross-link involves residue Lys1585. Lys1737 participates in a covalent cross-link: Glycyl lysine isopeptide (Lys-Gly) (interchain with G-Cter in SUMO2). The C2H2-type 2; atypical zinc finger occupies 1813 to 1838; sequence YRCWWHGCSLIFGVVDHLKQHLLTDH. A Glycyl lysine isopeptide (Lys-Gly) (interchain with G-Cter in SUMO2) cross-link involves residue Lys1864.

In terms of assembly, interacts with KNOP1. Interacts with TARDBP and NUP107. Interacts (via N-terminus) with RBM39. Interacts with the SH3 domains of FYN and GRB2. Phosphorylated by FYN in vitro.

It localises to the nucleus. The protein resides in the nucleolus. The protein localises to the nucleus speckle. Its function is as follows. RNA-binding protein. Specifically binds to 5'-GGGGCC-3' sequence repeats in RNA. Essential for maintenance of peripheral motor neuron and skeletal muscle function. Required for normal expression and/or alternative splicing of a number of genes in spinal cord and skeletal muscle, including the neurite outgrowth inhibitor RTN4. Also contributes to normal mitochondrial respiratory function in motor neurons, via an unknown mechanism. This chain is Zinc finger protein 106 (ZNF106), found in Homo sapiens (Human).